Consider the following 231-residue polypeptide: dTTP/UTP pyrophosphatase (231 aa).

The active-site Proton acceptor is the D85.

This sequence belongs to the Maf family. YhdE subfamily. Requires a divalent metal cation as cofactor.

It is found in the cytoplasm. It catalyses the reaction dTTP + H2O = dTMP + diphosphate + H(+). The enzyme catalyses UTP + H2O = UMP + diphosphate + H(+). In terms of biological role, nucleoside triphosphate pyrophosphatase that hydrolyzes dTTP and UTP. May have a dual role in cell division arrest and in preventing the incorporation of modified nucleotides into cellular nucleic acids. This chain is dTTP/UTP pyrophosphatase, found in Psychrobacter arcticus (strain DSM 17307 / VKM B-2377 / 273-4).